Here is an 80-residue protein sequence, read N- to C-terminus: Acyl carrier protein (80 aa).

The 76-residue stretch at 4–79 folds into the Carrier domain; sequence EAILEKVRSI…DAVKYIEDKQ (76 aa). Ser-39 is subject to O-(pantetheine 4'-phosphoryl)serine.

This sequence belongs to the acyl carrier protein (ACP) family. Post-translationally, 4'-phosphopantetheine is transferred from CoA to a specific serine of apo-ACP by AcpS. This modification is essential for activity because fatty acids are bound in thioester linkage to the sulfhydryl of the prosthetic group.

It is found in the cytoplasm. It participates in lipid metabolism; fatty acid biosynthesis. Carrier of the growing fatty acid chain in fatty acid biosynthesis. The protein is Acyl carrier protein of Prochlorococcus marinus (strain MIT 9313).